The sequence spans 304 residues: Tegument protein VP22 (304 aa).

Disordered stretches follow at residues 23–68 and 112–184; these read YSTV…PNDD and STSN…GTPK. The segment covering 43–58 has biased composition (basic and acidic residues); the sequence is RENDLYDKQSVSKEND. A compositionally biased stretch (pro residues) spans 123 to 142; that stretch reads AQPPPRGAAAAPPPRVPTRP. Over residues 143 to 154 the composition is skewed to low complexity; sequence PTRAAATSTTPR. Positions 160 to 163 match the Nuclear localization signal motif; that stretch reads PKQR. The Nuclear export signal motif lies at 233–245; it reads LDRFLKAAAIRIL. The interval 262–304 is disordered; it reads STPDGYAAAGPNGYDRRPRTASRRRSLKCKPPADDFFDDTNSG. The segment covering 280-289 has biased composition (basic residues); sequence RTASRRRSLK.

The protein belongs to the alphaherpesvirinae VP22 tegument protein family. As to quaternary structure, interacts with gE (via C-terminus); this interaction is necessary for the recruitment of VP22 to the Golgi and its packaging into virions. Interacts with gM (via C-terminus). Interacts with VP16; this interaction allows the formation of a tripartite complex composed of VP16, VP22 and UL41/VHS. Interacts with the capsid-binding protein UL16. Interacts with host CGAS. Post-translationally, highly phosphorylated in the host cell. Packaging is selective for underphosphorylated forms.

It localises to the virion tegument. Its subcellular location is the host cytoplasm. It is found in the host nucleus. The protein resides in the host Golgi apparatus. Tegument protein that plays different roles during the time course of infection. Participates in both the accumulation of viral mRNAs and viral protein translation at late time of infection. Modulates the RNase activity of the virion host shutoff protein UL41 probably to ensure necessary levels of key cellular mRNAs and proteins. Plays a role in microtubule reorganization that occurs after viral infection by stabilizing microtubule network. Plays a role in the inhibition of host innate immune system by targeting the CGAS enzymatic activity which is the principal cytosolic DNA sensor that detects invading viral DNA. Acts by mediating disruption of liquid-like droplets in which CGAS is activated, thereby preventing CGAS activity. This is Tegument protein VP22 from Equine herpesvirus 1 (strain Ab4p) (EHV-1).